The sequence spans 743 residues: Merozoite surface protein 9 (743 aa).

Positions 1–23 (MMNMKIVLFSLLLFVIRWNIISC) are cleaved as a signal peptide. Residues 77–235 (KELLKEKQYT…VNDEDDVNDE (159 aa)) are interaction with MSP1 and host SLC4A1/Band 3. 4 disordered regions span residues 202 to 282 (KSQG…ATAY), 459 to 487 (DNQAVDTKSMEEPKVKAQPALRGVEPTED), 512 to 540 (NNTPNVVPPTQSKKKNKNETVSGMDENFD), and 666 to 743 (VDAL…EESK). Over residues 211–224 (SQNQNENNDNQKYQ) the composition is skewed to polar residues. 8 repeat units span residues 226-231 (VNDEDD), 232-237 (VNDEED), 238-243 (TNDDED), 244-249 (TNDEED), 250-255 (TNDDED), 256-261 (TNDDED), 262-267 (TNDEED), and 268-273 (TNDEED). The 8 X 6 AA tandem repeats of [VT]-N-D-[ED]-[ED]-D stretch occupies residues 226–273 (VNDEDDVNDEEDTNDDEDTNDEEDTNDDEDTNDDEDTNDEEDTNDEED). Over residues 226–274 (VNDEDDVNDEEDTNDDEDTNDEEDTNDDEDTNDDEDTNDEEDTNDEEDH) the composition is skewed to acidic residues. The segment at 364–528 (LKDNLINYEF…PPTQSKKKNK (165 aa)) is interaction with MSP1 and host SLC4A1/Band 3. A compositionally biased stretch (basic and acidic residues) spans 459–473 (DNQAVDTKSMEEPKV). Over residues 512-521 (NNTPNVVPPT) the composition is skewed to low complexity. A coiled-coil region spans residues 644-732 (NQETEEEMEK…EEQEEEEEEI (89 aa)). Basic and acidic residues predominate over residues 672–722 (KNKEEEEKEKEKEKEKEEKEKEEKEKEEKEKEKEEKEKEKEEKEEEKKEKE). A compositionally biased stretch (acidic residues) spans 723 to 733 (EEQEEEEEEIV).

Belongs to the plasmodium ABRA family. In terms of assembly, forms a complex composed of MSP1, MSP6, MSP7, MSP9 and MSP3; within the complex, MSP6 and MSP9 mediate the binding to the host erythrocyte. Interacts with MSP1 subunits p19 and p42; the interaction is direct. Interacts with host SLC4A1/Band 3 protein (via the 5ABC region). MSP1 subunits p19 or p42, and MSP9 form a co-ligand complex that interacts with host SLC4A1/Band 3 protein. Post-translationally, not glycosylated.

The protein localises to the cell membrane. It localises to the parasitophorous vacuole lumen. Its subcellular location is the secreted. Its function is as follows. During the asexual blood stage, involved in the sialic acid-independent (SAID) merozoite invasion of host erythrocytes by binding to host SLC4A1/Band 3 protein on the surface of the host erythrocyte. The sequence is that of Merozoite surface protein 9 from Plasmodium falciparum (isolate Camp / Malaysia).